Consider the following 456-residue polypeptide: Bifunctional protein GlmU (456 aa).

The pyrophosphorylase stretch occupies residues 1-230 (MDKRFAVVLA…FQETLGVNDR (230 aa)). Residues 9–12 (LAAG), Lys-23, Gln-73, and 78–79 (GT) each bind UDP-N-acetyl-alpha-D-glucosamine. Asp-103 is a binding site for Mg(2+). Positions 140, 155, 170, and 228 each coordinate UDP-N-acetyl-alpha-D-glucosamine. Asn-228 lines the Mg(2+) pocket. Residues 231–251 (VALSQAEIYMKQRINKRHMQN) are linker. The N-acetyltransferase stretch occupies residues 252 to 456 (GVSLIDPDNT…EDYAENIHKK (205 aa)). UDP-N-acetyl-alpha-D-glucosamine contacts are provided by Arg-333 and Lys-351. The active-site Proton acceptor is the His-363. UDP-N-acetyl-alpha-D-glucosamine-binding residues include Tyr-366 and Asn-377. Acetyl-CoA is bound by residues 386–387 (NY), Ala-423, and Arg-440.

It in the N-terminal section; belongs to the N-acetylglucosamine-1-phosphate uridyltransferase family. This sequence in the C-terminal section; belongs to the transferase hexapeptide repeat family. As to quaternary structure, homotrimer. It depends on Mg(2+) as a cofactor.

The protein localises to the cytoplasm. It carries out the reaction alpha-D-glucosamine 1-phosphate + acetyl-CoA = N-acetyl-alpha-D-glucosamine 1-phosphate + CoA + H(+). The catalysed reaction is N-acetyl-alpha-D-glucosamine 1-phosphate + UTP + H(+) = UDP-N-acetyl-alpha-D-glucosamine + diphosphate. The protein operates within nucleotide-sugar biosynthesis; UDP-N-acetyl-alpha-D-glucosamine biosynthesis; N-acetyl-alpha-D-glucosamine 1-phosphate from alpha-D-glucosamine 6-phosphate (route II): step 2/2. It participates in nucleotide-sugar biosynthesis; UDP-N-acetyl-alpha-D-glucosamine biosynthesis; UDP-N-acetyl-alpha-D-glucosamine from N-acetyl-alpha-D-glucosamine 1-phosphate: step 1/1. Its pathway is bacterial outer membrane biogenesis; LPS lipid A biosynthesis. Functionally, catalyzes the last two sequential reactions in the de novo biosynthetic pathway for UDP-N-acetylglucosamine (UDP-GlcNAc). The C-terminal domain catalyzes the transfer of acetyl group from acetyl coenzyme A to glucosamine-1-phosphate (GlcN-1-P) to produce N-acetylglucosamine-1-phosphate (GlcNAc-1-P), which is converted into UDP-GlcNAc by the transfer of uridine 5-monophosphate (from uridine 5-triphosphate), a reaction catalyzed by the N-terminal domain. The polypeptide is Bifunctional protein GlmU (Bacillus licheniformis (strain ATCC 14580 / DSM 13 / JCM 2505 / CCUG 7422 / NBRC 12200 / NCIMB 9375 / NCTC 10341 / NRRL NRS-1264 / Gibson 46)).